The chain runs to 296 residues: Protoheme IX farnesyltransferase (296 aa).

The next 9 membrane-spanning stretches (helical) occupy residues 9 to 29, 36 to 56, 84 to 104, 108 to 128, 133 to 153, 163 to 183, 209 to 229, 234 to 254, and 265 to 285; these read VTKP…FLLA, YPLF…GCVF, AVSL…LWFG, LACW…SLYM, VYGT…GYCA, LILL…IAIF, ITLY…GGYA, LVVA…GYKV, and FGFS…DFMV.

The protein belongs to the UbiA prenyltransferase family. Protoheme IX farnesyltransferase subfamily.

Its subcellular location is the cell inner membrane. The catalysed reaction is heme b + (2E,6E)-farnesyl diphosphate + H2O = Fe(II)-heme o + diphosphate. It functions in the pathway porphyrin-containing compound metabolism; heme O biosynthesis; heme O from protoheme: step 1/1. In terms of biological role, converts heme B (protoheme IX) to heme O by substitution of the vinyl group on carbon 2 of heme B porphyrin ring with a hydroxyethyl farnesyl side group. The polypeptide is Protoheme IX farnesyltransferase (Citrobacter koseri (strain ATCC BAA-895 / CDC 4225-83 / SGSC4696)).